A 419-amino-acid chain; its full sequence is Serine hydroxymethyltransferase (419 aa).

Residues Leu118 and 122-124 contribute to the (6S)-5,6,7,8-tetrahydrofolate site; that span reads GHL. The residue at position 226 (Lys226) is an N6-(pyridoxal phosphate)lysine. Glu242 contacts (6S)-5,6,7,8-tetrahydrofolate.

Belongs to the SHMT family. Homodimer. Requires pyridoxal 5'-phosphate as cofactor.

The protein localises to the cytoplasm. The catalysed reaction is (6R)-5,10-methylene-5,6,7,8-tetrahydrofolate + glycine + H2O = (6S)-5,6,7,8-tetrahydrofolate + L-serine. Its pathway is one-carbon metabolism; tetrahydrofolate interconversion. It functions in the pathway amino-acid biosynthesis; glycine biosynthesis; glycine from L-serine: step 1/1. Catalyzes the reversible interconversion of serine and glycine with tetrahydrofolate (THF) serving as the one-carbon carrier. This reaction serves as the major source of one-carbon groups required for the biosynthesis of purines, thymidylate, methionine, and other important biomolecules. Also exhibits THF-independent aldolase activity toward beta-hydroxyamino acids, producing glycine and aldehydes, via a retro-aldol mechanism. This chain is Serine hydroxymethyltransferase, found in Metamycoplasma arthritidis (strain 158L3-1) (Mycoplasma arthritidis).